Consider the following 122-residue polypeptide: Large ribosomal subunit protein uL14c (122 aa).

Belongs to the universal ribosomal protein uL14 family. In terms of assembly, part of the 50S ribosomal subunit.

It localises to the plastid. Its subcellular location is the chloroplast. In terms of biological role, binds to 23S rRNA. The polypeptide is Large ribosomal subunit protein uL14c (Citrus sinensis (Sweet orange)).